The sequence spans 340 residues: Protein-lysine N-methyltransferase EEF2KMT (340 aa).

Methionine 1 is modified (N-acetylmethionine). S-adenosyl-L-methionine is bound by residues tryptophan 139, 165–167 (GSG), tryptophan 238, and alanine 257.

The protein belongs to the class I-like SAM-binding methyltransferase superfamily. EEF2KMT family. As to quaternary structure, interacts with FAM86B2 and FAM86C1P.

The protein localises to the cytoplasm. It carries out the reaction L-lysyl-[protein] + 3 S-adenosyl-L-methionine = N(6),N(6),N(6)-trimethyl-L-lysyl-[protein] + 3 S-adenosyl-L-homocysteine + 3 H(+). Its function is as follows. Catalyzes the trimethylation of eukaryotic elongation factor 2 (EEF2) on 'Lys-525'. The chain is Protein-lysine N-methyltransferase EEF2KMT (EEF2KMT) from Bos taurus (Bovine).